The sequence spans 146 residues: Large ribosomal subunit protein uL13 (146 aa).

It belongs to the universal ribosomal protein uL13 family. In terms of assembly, part of the 50S ribosomal subunit.

Functionally, this protein is one of the early assembly proteins of the 50S ribosomal subunit, although it is not seen to bind rRNA by itself. It is important during the early stages of 50S assembly. The protein is Large ribosomal subunit protein uL13 of Spiroplasma citri.